We begin with the raw amino-acid sequence, 800 residues long: Phenylalanine--tRNA ligase beta subunit (800 aa).

A tRNA-binding domain is found at 39 to 154 (TKDIKNLVVG…ESQVPGTDAL (116 aa)). In terms of domain architecture, B5 spans 408-483 (AFITPIDITA…RIYGYDDIPS (76 aa)). Mg(2+)-binding residues include D461, D467, E470, and E471. The 93-residue stretch at 708–800 (PRFPGMSRDI…ALIEQGAVIR (93 aa)) folds into the FDX-ACB domain.

The protein belongs to the phenylalanyl-tRNA synthetase beta subunit family. Type 1 subfamily. In terms of assembly, tetramer of two alpha and two beta subunits. It depends on Mg(2+) as a cofactor.

The protein resides in the cytoplasm. It carries out the reaction tRNA(Phe) + L-phenylalanine + ATP = L-phenylalanyl-tRNA(Phe) + AMP + diphosphate + H(+). In Staphylococcus aureus, this protein is Phenylalanine--tRNA ligase beta subunit.